We begin with the raw amino-acid sequence, 41 residues long: Large ribosomal subunit protein bL36 (41 aa).

Belongs to the bacterial ribosomal protein bL36 family.

The sequence is that of Large ribosomal subunit protein bL36 from Novosphingobium aromaticivorans (strain ATCC 700278 / DSM 12444 / CCUG 56034 / CIP 105152 / NBRC 16084 / F199).